The primary structure comprises 351 residues: Maleylacetate reductase (351 aa).

The protein belongs to the iron-containing alcohol dehydrogenase family. As to quaternary structure, homodimer.

It carries out the reaction 3-oxoadipate + NAD(+) = maleylacetate + NADH + H(+). The protein operates within aromatic compound metabolism. Its function is as follows. Involved in the gamma-resorcylate (2,6-dihydroxybenzoate) catabolism. Catalyzes the reduction of maleylacetate to 3-oxoadipate. In Rhizobium sp. (strain MTP-10005), this protein is Maleylacetate reductase.